A 549-amino-acid polypeptide reads, in one-letter code: Antagonist of mitotic exit network protein 1 (549 aa).

Over residues 1–11 the composition is skewed to polar residues; sequence MKLERVSSNGS. Residues 1 to 39 are disordered; it reads MKLERVSSNGSFKRGRDIQSLESPCTRPLKKMSPSPSFT.

This sequence belongs to the AMN1 family. As to quaternary structure, interacts with TEM1.

The protein resides in the cytoplasm. It localises to the nucleus. In terms of biological role, negative regulator of the mitotic exit network (MEN), required for multiple cell cycle checkpoints. Acts in the daughter cell to inhibit the mitotic exit pathway once MEN has executed its function. Through its binding ability to TEM1, interferes with the TEM1-CDC5 association, required for CDC5 kinase activation and MEN activation. Required for daughter cell separation and chromosome stability. Involved in copper sensitivity. The chain is Antagonist of mitotic exit network protein 1 (AMN1) from Saccharomyces cerevisiae (strain ATCC 204508 / S288c) (Baker's yeast).